The primary structure comprises 252 residues: tRNA (guanine-N(1)-)-methyltransferase (252 aa).

S-adenosyl-L-methionine contacts are provided by residues Gly113 and 133-138 (VGDFVL).

It belongs to the RNA methyltransferase TrmD family. In terms of assembly, homodimer.

The protein resides in the cytoplasm. The catalysed reaction is guanosine(37) in tRNA + S-adenosyl-L-methionine = N(1)-methylguanosine(37) in tRNA + S-adenosyl-L-homocysteine + H(+). In terms of biological role, specifically methylates guanosine-37 in various tRNAs. This Francisella tularensis subsp. holarctica (strain FTNF002-00 / FTA) protein is tRNA (guanine-N(1)-)-methyltransferase.